The following is a 272-amino-acid chain: Glutamate racemase (272 aa).

Residues 10–11 (DS) and 42–43 (YG) contribute to the substrate site. Cys73 functions as the Proton donor/acceptor in the catalytic mechanism. 74 to 75 (NT) lines the substrate pocket. Cys183 acts as the Proton donor/acceptor in catalysis. Substrate is bound at residue 184-185 (TH).

It belongs to the aspartate/glutamate racemases family.

It catalyses the reaction L-glutamate = D-glutamate. It participates in cell wall biogenesis; peptidoglycan biosynthesis. Its function is as follows. Provides the (R)-glutamate required for cell wall biosynthesis. This is Glutamate racemase from Leifsonia xyli subsp. xyli (strain CTCB07).